Here is an 87-residue protein sequence, read N- to C-terminus: Small ribosomal subunit protein bS20 (87 aa).

Residues 1-10 (MANIKSKQKR) show a composition bias toward basic residues. Positions 1 to 27 (MANIKSKQKRILTNEKSRQRNKSVRSA) are disordered.

Belongs to the bacterial ribosomal protein bS20 family.

In terms of biological role, binds directly to 16S ribosomal RNA. The sequence is that of Small ribosomal subunit protein bS20 from Corynebacterium aurimucosum (strain ATCC 700975 / DSM 44827 / CIP 107346 / CN-1) (Corynebacterium nigricans).